Consider the following 692-residue polypeptide: TBC1 domain family member 14 (692 aa).

Residue Ser91 is modified to Phosphoserine. 2 disordered regions span residues 270–303 (NAQK…RKNL) and 315–335 (LEDR…KHRQ). Residues 271–287 (AQKDAKKLQKEYEDKAG) are compositionally biased toward basic and acidic residues. Ser294 is modified (phosphoserine). The span at 326-335 (PAEEAQKHRQ) shows a compositional bias: basic and acidic residues. One can recognise a Rab-GAP TBC domain in the interval 400–610 (GIPPSVRGKV…RVWDVFCRDG (211 aa)).

In terms of assembly, interacts with ULK1. May interact with RAB11A and RAB11B, but does not exhibit any GTPase-activating activity toward these proteins. Interacts with TRAPPC8.

It is found in the golgi apparatus. Its subcellular location is the cis-Golgi network. It localises to the trans-Golgi network. Plays a role in the regulation of starvation-induced autophagosome formation. Together with the TRAPPIII complex, regulates a constitutive trafficking step from peripheral recycling endosomes to the early Golgi, maintaining the cycling pool of ATG9 required for initiation of autophagy. The chain is TBC1 domain family member 14 (TBC1D14) from Bos taurus (Bovine).